We begin with the raw amino-acid sequence, 106 residues long: Met repressor (106 aa).

This sequence belongs to the MetJ family. Homodimer.

The protein resides in the cytoplasm. Its function is as follows. This regulatory protein, when combined with SAM (S-adenosylmethionine) represses the expression of the methionine regulon and of enzymes involved in SAM synthesis. The protein is Met repressor of Vibrio campbellii (strain ATCC BAA-1116).